We begin with the raw amino-acid sequence, 235 residues long: Probable WRKY transcription factor 66 (235 aa).

Residues 79–147 (SPTPAHIDGF…YVGQHACEAP (69 aa)) constitute a DNA-binding region (WRKY).

It belongs to the WRKY group III family.

It localises to the nucleus. Its function is as follows. Transcription factor. Interacts specifically with the W box (5'-(T)TGAC[CT]-3'), a frequently occurring elicitor-responsive cis-acting element. The chain is Probable WRKY transcription factor 66 (WRKY66) from Arabidopsis thaliana (Mouse-ear cress).